Here is a 364-residue protein sequence, read N- to C-terminus: MKKNNRVVVGMSGGVDSSVSAYLLKEQGFDVIGVTMQIWQDKDEEAVRVEGGCCSLSAVNDARRVANKIGIKYYVMNFKDVFKEKVIDYFVDEYLRGRTPNPCIACNKYIKFEELLKRAWMIDAYYVATGHYAVKEYDEERGRYLLKKSVDTSKDQTYVLYNLTQTQLEHILFPLGKYKKDEVRELAKNLGLPVASKPDSQEICFVTDNDYGKFIRENAKEEIKPGEFRDTRGRFLGYHKGIIHYTIGQRKGLGISVGKPLYVVDIDAENNVVVLGYGDEVFGDELISYNNNFISIDKLEREMRVKAKIRYNAKEQDAVIRPLEDGKVFVKFDNPQRAITPGQSVVFYDGDIVVGGGTIERKVR.

ATP-binding positions include 10 to 17 and Met36; that span reads GMSGGVDS. Residue Cys106 is the Nucleophile of the active site. Cys106 and Cys204 are joined by a disulfide. An ATP-binding site is contributed by Gly130. Positions 154–156 are interaction with tRNA; sequence KDQ. Catalysis depends on Cys204, which acts as the Cysteine persulfide intermediate. The tract at residues 310-311 is interaction with tRNA; it reads RY.

This sequence belongs to the MnmA/TRMU family.

It is found in the cytoplasm. It catalyses the reaction S-sulfanyl-L-cysteinyl-[protein] + uridine(34) in tRNA + AH2 + ATP = 2-thiouridine(34) in tRNA + L-cysteinyl-[protein] + A + AMP + diphosphate + H(+). Its function is as follows. Catalyzes the 2-thiolation of uridine at the wobble position (U34) of tRNA, leading to the formation of s(2)U34. The protein is tRNA-specific 2-thiouridylase MnmA 1 of Thermoanaerobacter sp. (strain X514).